A 315-amino-acid chain; its full sequence is Methenyltetrahydromethanopterin cyclohydrolase (315 aa).

This sequence belongs to the MCH family.

The protein localises to the cytoplasm. The enzyme catalyses 5,10-methenyl-5,6,7,8-tetrahydromethanopterin + H2O = N(5)-formyl-5,6,7,8-tetrahydromethanopterin + H(+). The protein operates within one-carbon metabolism; methanogenesis from CO(2); 5,10-methenyl-5,6,7,8-tetrahydromethanopterin from CO(2): step 3/3. In terms of biological role, catalyzes the reversible interconversion of 5-formyl-H(4)MPT to methenyl-H(4)MPT(+). The protein is Methenyltetrahydromethanopterin cyclohydrolase of Methanospirillum hungatei JF-1 (strain ATCC 27890 / DSM 864 / NBRC 100397 / JF-1).